The chain runs to 55 residues: Large ribosomal subunit protein bL33 (55 aa).

It belongs to the bacterial ribosomal protein bL33 family.

This Buchnera aphidicola subsp. Schizaphis graminum (strain Sg) protein is Large ribosomal subunit protein bL33.